The primary structure comprises 384 residues: Lipid-A-disaccharide synthase (384 aa).

Belongs to the LpxB family.

It catalyses the reaction a lipid X + a UDP-2-N,3-O-bis[(3R)-3-hydroxyacyl]-alpha-D-glucosamine = a lipid A disaccharide + UDP + H(+). It functions in the pathway bacterial outer membrane biogenesis; LPS lipid A biosynthesis. Functionally, condensation of UDP-2,3-diacylglucosamine and 2,3-diacylglucosamine-1-phosphate to form lipid A disaccharide, a precursor of lipid A, a phosphorylated glycolipid that anchors the lipopolysaccharide to the outer membrane of the cell. The protein is Lipid-A-disaccharide synthase of Neisseria meningitidis serogroup C / serotype 2a (strain ATCC 700532 / DSM 15464 / FAM18).